Reading from the N-terminus, the 725-residue chain is Methionine--tRNA ligase (725 aa).

A 'HIGH' region motif is present at residues 27–37 (PYANGQIHIGH). Zn(2+) is bound by residues C158, C161, C171, and C174. A 'KMSKS' region motif is present at residues 348-352 (KMSKS). K351 contacts ATP. The tRNA-binding domain maps to 619-725 (DFAKIDLRIA…SGAKPGMRVK (107 aa)).

It belongs to the class-I aminoacyl-tRNA synthetase family. MetG type 1 subfamily. As to quaternary structure, homodimer. It depends on Zn(2+) as a cofactor.

It localises to the cytoplasm. It carries out the reaction tRNA(Met) + L-methionine + ATP = L-methionyl-tRNA(Met) + AMP + diphosphate. Is required not only for elongation of protein synthesis but also for the initiation of all mRNA translation through initiator tRNA(fMet) aminoacylation. This is Methionine--tRNA ligase from Burkholderia mallei (strain NCTC 10247).